An 80-amino-acid polypeptide reads, in one-letter code: Cell division topological specificity factor (80 aa).

The protein belongs to the MinE family.

Prevents the cell division inhibition by proteins MinC and MinD at internal division sites while permitting inhibition at polar sites. This ensures cell division at the proper site by restricting the formation of a division septum at the midpoint of the long axis of the cell. This chain is Cell division topological specificity factor, found in Wolinella succinogenes (strain ATCC 29543 / DSM 1740 / CCUG 13145 / JCM 31913 / LMG 7466 / NCTC 11488 / FDC 602W) (Vibrio succinogenes).